Reading from the N-terminus, the 138-residue chain is Small ribosomal subunit protein uS11c (138 aa).

The protein belongs to the universal ribosomal protein uS11 family. Part of the 30S ribosomal subunit.

It is found in the plastid. It localises to the chloroplast. In Phaseolus vulgaris (Kidney bean), this protein is Small ribosomal subunit protein uS11c.